The following is a 105-amino-acid chain: Large ribosomal subunit protein uL24 (105 aa).

The protein belongs to the universal ribosomal protein uL24 family. As to quaternary structure, part of the 50S ribosomal subunit.

Its function is as follows. One of two assembly initiator proteins, it binds directly to the 5'-end of the 23S rRNA, where it nucleates assembly of the 50S subunit. Functionally, one of the proteins that surrounds the polypeptide exit tunnel on the outside of the subunit. This is Large ribosomal subunit protein uL24 from Buchnera aphidicola subsp. Cinara cedri (strain Cc).